Reading from the N-terminus, the 187-residue chain is MITMKDIIREGNPTLRAVAEEVPVPITEEDRQLGEDMLTFLKNSQDPVKAEELQLRGGVGLAAPQLDISKRIIAVHVPSNDPENETPSLSTVMYNPKILSHSVQDVCLGEGEGCLSVDRDVPGYVVRHNKITVSYFDMAGEKHKVRLKNYEAIVVQHEIDHINGIMFYDHINKENPFALKEGVLVIE.

Residues cysteine 114 and histidine 157 each coordinate Fe cation. Glutamate 158 is a catalytic residue. Residue histidine 161 coordinates Fe cation.

This sequence belongs to the polypeptide deformylase family. Fe(2+) serves as cofactor.

It catalyses the reaction N-terminal N-formyl-L-methionyl-[peptide] + H2O = N-terminal L-methionyl-[peptide] + formate. Removes the formyl group from the N-terminal Met of newly synthesized proteins. Requires at least a dipeptide for an efficient rate of reaction. N-terminal L-methionine is a prerequisite for activity but the enzyme has broad specificity at other positions. This Enterococcus faecalis (strain ATCC 700802 / V583) protein is Peptide deformylase.